The sequence spans 87 residues: Small ribosomal subunit protein bS20 (87 aa).

Basic residues predominate over residues 1-22 (MANIKSAKKRAVQSEKRRKHNA). Positions 1–27 (MANIKSAKKRAVQSEKRRKHNASSRSM) are disordered.

The protein belongs to the bacterial ribosomal protein bS20 family.

Binds directly to 16S ribosomal RNA. In Pectobacterium atrosepticum (strain SCRI 1043 / ATCC BAA-672) (Erwinia carotovora subsp. atroseptica), this protein is Small ribosomal subunit protein bS20.